The chain runs to 242 residues: 1-(5-phosphoribosyl)-5-[(5-phosphoribosylamino)methylideneamino] imidazole-4-carboxamide isomerase (242 aa).

The Proton acceptor role is filled by Asp-8. Catalysis depends on Asp-129, which acts as the Proton donor.

This sequence belongs to the HisA/HisF family.

Its subcellular location is the cytoplasm. It carries out the reaction 1-(5-phospho-beta-D-ribosyl)-5-[(5-phospho-beta-D-ribosylamino)methylideneamino]imidazole-4-carboxamide = 5-[(5-phospho-1-deoxy-D-ribulos-1-ylimino)methylamino]-1-(5-phospho-beta-D-ribosyl)imidazole-4-carboxamide. Its pathway is amino-acid biosynthesis; L-histidine biosynthesis; L-histidine from 5-phospho-alpha-D-ribose 1-diphosphate: step 4/9. In Clostridium botulinum (strain Kyoto / Type A2), this protein is 1-(5-phosphoribosyl)-5-[(5-phosphoribosylamino)methylideneamino] imidazole-4-carboxamide isomerase.